Here is a 185-residue protein sequence, read N- to C-terminus: ATP-dependent protease subunit HslV (185 aa).

Threonine 13 is a catalytic residue. Na(+) contacts are provided by glycine 167, cysteine 170, and threonine 173.

This sequence belongs to the peptidase T1B family. HslV subfamily. A double ring-shaped homohexamer of HslV is capped on each side by a ring-shaped HslU homohexamer. The assembly of the HslU/HslV complex is dependent on binding of ATP.

It is found in the cytoplasm. It carries out the reaction ATP-dependent cleavage of peptide bonds with broad specificity.. Its activity is regulated as follows. Allosterically activated by HslU binding. In terms of biological role, protease subunit of a proteasome-like degradation complex believed to be a general protein degrading machinery. In Sinorhizobium fredii (strain NBRC 101917 / NGR234), this protein is ATP-dependent protease subunit HslV.